The primary structure comprises 729 residues: Serine/threonine-protein kinase TBK1 (729 aa).

Positions 9 to 310 (WLLSDILGQG…ETSDVLHRMV (302 aa)) constitute a Protein kinase domain. Residue 15-23 (LGQGATANV) participates in ATP binding. Lysine 30 participates in a covalent cross-link: Glycyl lysine isopeptide (Lys-Gly) (interchain with G-Cter in ubiquitin). Lysine 38 contacts ATP. The active-site Proton acceptor is the aspartate 135. Serine 172 is subject to Phosphoserine; by autocatalysis and IKKB. Residues 309–385 (MVIHVFSLQH…ENPIFVTSRE (77 aa)) enclose the Ubiquitin-like domain. Lysine 401 participates in a covalent cross-link: Glycyl lysine isopeptide (Lys-Gly) (interchain with G-Cter in ubiquitin). Coiled-coil stretches lie at residues 407–657 (DLDG…LQET) and 658–713 (LPQK…ILER). An interaction with AZI2, TANK and TBKBP1 region spans residues 621-729 (RKMLHLRKQL…DGGLRNVDCL (109 aa)). Residue lysine 670 forms a Glycyl lysine isopeptide (Lys-Gly) (interchain with G-Cter in ubiquitin) linkage. Serine 716 is modified (phosphoserine).

This sequence belongs to the protein kinase superfamily. Ser/Thr protein kinase family. I-kappa-B kinase subfamily. As to quaternary structure, homodimer. Interacts with DDX3X, TIRAP and TRAF2. Part of a ternary complex consisting of TANK, TRAF2 and TBK1. Interacts with AZI2, TANK and TBKBP1; these interactions are mutually exclusive and mediate TBK1 activation. Interacts with GSK3B; this interaction promotes TBK1 self-association and autophosphorylation. Interacts with SIKE1; SIKE1 is associated with TBK1 under physiological condition and dissociated from TBK1 upon viral infection or TLR3 stimulation. Interacts with IRF3, leading to IRF3 phosphorylation. Interacts with RIGI. Interacts with CYLD. Interacts with OPTN and TRAF3. Interacts with SRC. Interacts with the exocyst complex subunit SEC5/EXOC2; this interaction is sufficient to trigger TBK1 activity. Interacts with STING1, leading to STING1 phosphorylation. Interacts with IFIT3 (via N-terminus). Interacts with MAVS; interaction only takes place in the presence of IFIT3 and leads to MAVS phosphorylation. Interacts (via protein kinase domain) with TTLL12 (via TTL domain); the interaction prevents MAVS binding to TBK1. Interacts with TICAM1; this interaction is enhanced in the presence of WDFY1 and leads to TICAM1 phosphorylation. Interacts with TRIM26. Interacts with TRIM23. Interacts with TTC4 and IKBKE. Interacts with HNRNPA2B1. Interacts with DDX3X. Interacts with TRIM14. Interacts with CEP170; efficient complex formation may be dependent on the presence of CCDC61. Interacts with TRAF3IP3. Interacts with HSP90AA1; the interaction mediates TBK1 association with TOMM70. Interacts with TAX1BP1. Interacts with kinase IKBKB; the complex interacts with STAT1, leading to phosphorylation of STAT1 on 'Thr-748' by IKBKB. Interacts with ICOS; this interaction is critical for the maturation of T follicular regulatory cells. Interacts with RNF144B; this interaction prevents TBK1 phosphorylation and subsequent activation. Interacts with ASB8; this interaction promotes TBK1 proteasomal degradation. Post-translationally, autophosphorylation at Ser-172 activates the kinase, and is an essential step for virus-triggered signaling. Phosphorylated by IKBKB/IKKB at Ser-172. Phosphorylation requires homodimerization and ubiquitination at Lys-30 and Lys-401. Dephosphorylated at Ser-172 by PPM1B and this negatively regulates its role in mediating antiviral response. 'Lys-63'-linked polyubiquitination by MIB1 after RNA virus infection, or by NRDP1 after LPS stimulation at Lys-30 and Lys-401, participates in kinase activation. 'Lys-48'-linked polyubiquitination at Lys-670 by DTX4 leads to proteasomal degradation. 'Lys-48'-linked polyubiquitination by TRAIP also leads to proteasomal degradation. 'Lys-48'-linked polyubiquitination by TRAF7; leading to proteasomal degradation. 'Lys-63'-linked polyubiquitination by RNF128 at Lys-30 and Lys-401 leads to the activation of antiviral responses. 'Lys-48'-linked polyubiquitination after 'lys-33'-linked deubiquitination by USP38 promotes TBK1 degradation.

The protein resides in the cytoplasm. It catalyses the reaction L-seryl-[protein] + ATP = O-phospho-L-seryl-[protein] + ADP + H(+). The catalysed reaction is L-threonyl-[protein] + ATP = O-phospho-L-threonyl-[protein] + ADP + H(+). Its activity is regulated as follows. Kinase activity is inhibited competitively by amlexanox. In terms of biological role, serine/threonine kinase that plays an essential role in regulating inflammatory responses to foreign agents. Following activation of toll-like receptors by viral or bacterial components, associates with TRAF3 and TANK and phosphorylates interferon regulatory factors (IRFs) IRF3 and IRF7 as well as DDX3X. This activity allows subsequent homodimerization and nuclear translocation of the IRFs leading to transcriptional activation of pro-inflammatory and antiviral genes including IFNA and IFNB. In order to establish such an antiviral state, TBK1 form several different complexes whose composition depends on the type of cell and cellular stimuli. Thus, several scaffolding molecules including FADD, TRADD, MAVS, AZI2, TANK or TBKBP1/SINTBAD can be recruited to the TBK1-containing-complexes. Plays a key role in IRF3 activation: acts by first phosphorylating innate adapter proteins MAVS, STING1 and TICAM1 on their pLxIS motif, leading to recruitment of IRF3, thereby licensing IRF3 for phosphorylation by TBK1. Under particular conditions, functions as a NF-kappa-B effector by phosphorylating NF-kappa-B inhibitor alpha/NFKBIA, IKBKB or RELA to translocate NF-Kappa-B to the nucleus. Restricts bacterial proliferation by phosphorylating the autophagy receptor OPTN/Optineurin on 'Ser-177', thus enhancing LC3 binding affinity and antibacterial autophagy. Phosphorylates SMCR8 component of the C9orf72-SMCR8 complex, promoting autophagosome maturation. Phosphorylates ATG8 proteins MAP1LC3C and GABARAPL2, thereby preventing their delipidation and premature removal from nascent autophagosomes. Seems to play a role in energy balance regulation by sustaining a state of chronic, low-grade inflammation in obesity, which leads to a negative impact on insulin sensitivity. Acts both as a positive and negative regulator of the mTORC1 complex, depending on the context: activates mTORC1 in response to growth factors by catalyzing phosphorylation of MTOR, while it limits the mTORC1 complex by promoting phosphorylation of RPTOR. Acts as a positive regulator of the mTORC2 complex by mediating phosphorylation of MTOR, leading to increased phosphorylation and activation of AKT1. Phosphorylates and activates AKT1. Involved in the regulation of TNF-induced RIPK1-mediated cell death, probably acting via CYLD phosphorylation that in turn controls RIPK1 ubiquitination status. Also participates in the differentiation of T follicular regulatory cells together with the receptor ICOS. This is Serine/threonine-protein kinase TBK1 from Mus musculus (Mouse).